The chain runs to 310 residues: MSLKVVFMGTPDFAVPTLAEIVGGGHEVVAVYTRAPAPAGRGMALRPSPVQALAERFGLPVLTPSTLRGPEAAETFRAHGADVAVVVAYGMILPPAILDAPPLGCLNLHASILPRWRGAAPIQRAVMAGDAETGVAVMRMEPGLDTGPVAMLERVAISPEMTAGDLHDRLMPLGADLMHRALGALERGGLTFTPQPAEGVVYAHKITNEEARLDWTAPAARLHDRVRGLSPFPGAFFLADLGRGPERVKVLRARSAEGSGAPGTLLDEAGTVACGEGALRLLRVQPAGKAAMEAADFLRGRRLEPGTRLA.

111-114 contacts (6S)-5,6,7,8-tetrahydrofolate; that stretch reads SILP.

It belongs to the Fmt family.

The enzyme catalyses L-methionyl-tRNA(fMet) + (6R)-10-formyltetrahydrofolate = N-formyl-L-methionyl-tRNA(fMet) + (6S)-5,6,7,8-tetrahydrofolate + H(+). Functionally, attaches a formyl group to the free amino group of methionyl-tRNA(fMet). The formyl group appears to play a dual role in the initiator identity of N-formylmethionyl-tRNA by promoting its recognition by IF2 and preventing the misappropriation of this tRNA by the elongation apparatus. This Methylobacterium sp. (strain 4-46) protein is Methionyl-tRNA formyltransferase.